The chain runs to 357 residues: Probable dual-specificity RNA methyltransferase RlmN (357 aa).

Residue glutamate 95 is the Proton acceptor of the active site. The region spanning 106-340 (NRDRHTVCVS…VSVREEKGTD (235 aa)) is the Radical SAM core domain. Cysteine 113 and cysteine 345 form a disulfide bridge. [4Fe-4S] cluster-binding residues include cysteine 120, cysteine 124, and cysteine 127. Residues 172–173 (GE), serine 204, 227–229 (SLH), and asparagine 302 contribute to the S-adenosyl-L-methionine site. The active-site S-methylcysteine intermediate is cysteine 345.

The protein belongs to the radical SAM superfamily. RlmN family. The cofactor is [4Fe-4S] cluster.

It localises to the cytoplasm. The enzyme catalyses adenosine(2503) in 23S rRNA + 2 reduced [2Fe-2S]-[ferredoxin] + 2 S-adenosyl-L-methionine = 2-methyladenosine(2503) in 23S rRNA + 5'-deoxyadenosine + L-methionine + 2 oxidized [2Fe-2S]-[ferredoxin] + S-adenosyl-L-homocysteine. It carries out the reaction adenosine(37) in tRNA + 2 reduced [2Fe-2S]-[ferredoxin] + 2 S-adenosyl-L-methionine = 2-methyladenosine(37) in tRNA + 5'-deoxyadenosine + L-methionine + 2 oxidized [2Fe-2S]-[ferredoxin] + S-adenosyl-L-homocysteine. In terms of biological role, specifically methylates position 2 of adenine 2503 in 23S rRNA and position 2 of adenine 37 in tRNAs. The sequence is that of Probable dual-specificity RNA methyltransferase RlmN from Desulfitobacterium hafniense (strain Y51).